The sequence spans 148 residues: Homoprotocatechuate degradative operon repressor (148 aa).

Positions 2-134 (HDSLTIALLQ…LTHLLEEFIA (133 aa)) constitute an HTH marR-type domain.

Repressor for the homoprotocatechuate catabolic pathway hpc operon. This chain is Homoprotocatechuate degradative operon repressor (hpcR), found in Escherichia coli.